The following is a 547-amino-acid chain: DEAD-box ATP-dependent RNA helicase 31 (547 aa).

Acidic residues predominate over residues 1 to 34 (MFDFGLSEDDSELGEVDEDDGPSGFEDDLFDDEG). The segment at 1-74 (MFDFGLSEDD…HTRESGGGDS (74 aa)) is disordered. Positions 53–70 (IKGEPIDQEGVVHTRESG) are enriched in basic and acidic residues. Residues 79 to 107 (TRFDECSLSPLTLKGVKAAGYERMTAVQE) carry the Q motif motif. Residues 110-293 (LPIILKGKDV…HIAMKRDLEF (184 aa)) enclose the Helicase ATP-binding domain. 123-130 (AKTGTGKT) lines the ATP pocket. The DEAD box signature appears at 241–244 (DEAD). One can recognise a Helicase C-terminal domain in the interval 327–478 (LLTDHISENV…TKRKVEKALA (152 aa)).

This sequence belongs to the DEAD box helicase family.

It carries out the reaction ATP + H2O = ADP + phosphate + H(+). This is DEAD-box ATP-dependent RNA helicase 31 from Oryza sativa subsp. japonica (Rice).